We begin with the raw amino-acid sequence, 869 residues long: Histone deacetylase 4 (869 aa).

3 disordered regions span residues 1 to 25 (MEEASSSTGSAGGAGPSVPNLPSTS), 128 to 167 (SSSNGNLSVPQTPTKEHHPTAPTSNRKCDLPRSNSTTISQ), and 180 to 218 (RSKGESNSQSNLMSNSVTANGNGHDNGRKLKNSNSQVNV). Polar residues predominate over residues 184–202 (ESNSQSNLMSNSVTANGNG). Serine 251 carries the phosphoserine modification. A histone deacetylase region spans residues 460–802 (CTTGLGYDQA…VQALIGESDD (343 aa)). Residue histidine 608 is part of the active site.

This sequence belongs to the histone deacetylase family. HD type 2 subfamily. In terms of assembly, interacts with mef-2. Phosphorylated by serine/threonine-protein kinase kin-29 at Ser-251; the phosphorylation inhibits repression of transcription by mef-2. May be phosphorylated by either cyclic-AMP dependent or cyclic-GMP dependent protein kinases. Expressed in body-wall muscle cells, hypodermal seam cells and neuronal cells including sensory amphid neuronal processes, the nerve ring, ventral nerve cords and motor neuronal commissures.

The protein localises to the nucleus. The enzyme catalyses N(6)-acetyl-L-lysyl-[histone] + H2O = L-lysyl-[histone] + acetate. Responsible for the deacetylation of lysine residues on the N-terminal part of the core histones (H2A, H2B, H3 and H4). Histone deacetylation gives a tag for epigenetic repression and plays an important role in transcriptional regulation, cell cycle progression and developmental events. Histone deacetylases act via the formation of large multiprotein complexes. Involved in transduction of sensory signals, together with egl-4, kin-29 and mef-2; binding to transcription factor mef-2 enables negative modulation of chemoreceptor gene expression in chemosensory neurons. May be involved in muscle development. This is Histone deacetylase 4 (hda-4) from Caenorhabditis elegans.